The chain runs to 319 residues: Beta-ketoacyl-[acyl-carrier-protein] synthase III (319 aa).

Catalysis depends on residues cysteine 112 and histidine 246. An ACP-binding region spans residues 247 to 251; it reads QANFR. Residue asparagine 276 is part of the active site.

The protein belongs to the thiolase-like superfamily. FabH family. In terms of assembly, homodimer.

The protein localises to the cytoplasm. The catalysed reaction is malonyl-[ACP] + acetyl-CoA + H(+) = 3-oxobutanoyl-[ACP] + CO2 + CoA. The protein operates within lipid metabolism; fatty acid biosynthesis. Its function is as follows. Catalyzes the condensation reaction of fatty acid synthesis by the addition to an acyl acceptor of two carbons from malonyl-ACP. Catalyzes the first condensation reaction which initiates fatty acid synthesis and may therefore play a role in governing the total rate of fatty acid production. Possesses both acetoacetyl-ACP synthase and acetyl transacylase activities. Its substrate specificity determines the biosynthesis of branched-chain and/or straight-chain of fatty acids. This is Beta-ketoacyl-[acyl-carrier-protein] synthase III from Shewanella oneidensis (strain ATCC 700550 / JCM 31522 / CIP 106686 / LMG 19005 / NCIMB 14063 / MR-1).